The following is a 142-amino-acid chain: Alpha-lactalbumin (142 aa).

The N-terminal stretch at 1–19 (MRFFVPLFLVGILFPAILA) is a signal peptide. A C-type lysozyme domain is found at 20–142 (KQFTKCELSQ…KLEQWLCEKL (123 aa)). 4 cysteine pairs are disulfide-bonded: Cys-25–Cys-139, Cys-47–Cys-130, Cys-80–Cys-96, and Cys-92–Cys-110. Residues Thr-57 and Gln-58 each contribute to the Ca(2+) site. N-linked (GlcNAc...) asparagine glycosylation is present at Asn-64. Residue Glu-68 participates in Zn(2+) binding. N-linked (GlcNAc...) asparagine; atypical; partial glycosylation occurs at Asn-90. Lys-98, Leu-100, Asp-101, Asp-102, Asp-103, Asp-106, and Asp-107 together coordinate Ca(2+). Glu-135 contributes to the Zn(2+) binding site.

This sequence belongs to the glycosyl hydrolase 22 family. As to quaternary structure, lactose synthase (LS) is a heterodimer of a catalytic component, beta1,4-galactosyltransferase (beta4Gal-T1) and a regulatory component, alpha-lactalbumin (LA). As to expression, mammary gland specific. Secreted in milk.

The protein resides in the secreted. Its function is as follows. Regulatory subunit of lactose synthase, changes the substrate specificity of galactosyltransferase in the mammary gland making glucose a good acceptor substrate for this enzyme. This enables LS to synthesize lactose, the major carbohydrate component of milk. In other tissues, galactosyltransferase transfers galactose onto the N-acetylglucosamine of the oligosaccharide chains in glycoproteins. This chain is Alpha-lactalbumin (LALBA), found in Homo sapiens (Human).